The following is a 245-amino-acid chain: Outer membrane protein assembly factor BamD (245 aa).

The signal sequence occupies residues 1 to 19; sequence MTRMKYLVAAATLSLFLAG. Residue Cys-20 is the site of N-palmitoyl cysteine attachment. Cys-20 carries S-diacylglycerol cysteine lipidation.

It belongs to the BamD family. In terms of assembly, part of the Bam complex, which is composed of the outer membrane protein BamA, and four lipoproteins BamB, BamC, BamD and BamE.

The protein localises to the cell outer membrane. Part of the outer membrane protein assembly complex, which is involved in assembly and insertion of beta-barrel proteins into the outer membrane. Constitutes, with BamA, the core component of the assembly machinery. The chain is Outer membrane protein assembly factor BamD from Escherichia coli O157:H7.